The primary structure comprises 295 residues: Probable aspartoacylase (295 aa).

Residues H16 and E19 each coordinate Zn(2+). Substrate-binding positions include R58 and 65–66; that span reads NR. H107 lines the Zn(2+) pocket. 2 residues coordinate substrate: E166 and Y277.

This sequence belongs to the AspA/AstE family. Aspartoacylase subfamily. Zn(2+) serves as cofactor.

The catalysed reaction is an N-acyl-L-aspartate + H2O = a carboxylate + L-aspartate. The polypeptide is Probable aspartoacylase (Acaryochloris marina (strain MBIC 11017)).